The chain runs to 87 residues: Large ribosomal subunit protein bL27 (87 aa).

This sequence belongs to the bacterial ribosomal protein bL27 family.

This is Large ribosomal subunit protein bL27 from Pseudarthrobacter chlorophenolicus (strain ATCC 700700 / DSM 12829 / CIP 107037 / JCM 12360 / KCTC 9906 / NCIMB 13794 / A6) (Arthrobacter chlorophenolicus).